A 148-amino-acid chain; its full sequence is Nucleoside diphosphate kinase (148 aa).

ATP contacts are provided by Lys9, Phe57, Arg85, Thr91, Arg102, and Asn112. Thr91 is modified (phosphothreonine). Residue His115 is the Pros-phosphohistidine intermediate of the active site. Residue Ser122 is modified to Phosphoserine.

The protein belongs to the NDK family. As to quaternary structure, homotetramer. The cofactor is Mg(2+).

The protein localises to the cytoplasm. The enzyme catalyses a 2'-deoxyribonucleoside 5'-diphosphate + ATP = a 2'-deoxyribonucleoside 5'-triphosphate + ADP. It catalyses the reaction a ribonucleoside 5'-diphosphate + ATP = a ribonucleoside 5'-triphosphate + ADP. Major role in the synthesis of nucleoside triphosphates other than ATP. The ATP gamma phosphate is transferred to the NDP beta phosphate via a ping-pong mechanism, using a phosphorylated active-site intermediate. This is Nucleoside diphosphate kinase from Bacillus cereus (strain ATCC 14579 / DSM 31 / CCUG 7414 / JCM 2152 / NBRC 15305 / NCIMB 9373 / NCTC 2599 / NRRL B-3711).